A 702-amino-acid polypeptide reads, in one-letter code: Elongation factor G (702 aa).

The tr-type G domain maps to 8 to 290 (ARYRNIGISA…AVIEYLPAPT (283 aa)). GTP is bound by residues 17 to 24 (AHIDAGKT), 88 to 92 (DTPGH), and 142 to 145 (NKMD).

This sequence belongs to the TRAFAC class translation factor GTPase superfamily. Classic translation factor GTPase family. EF-G/EF-2 subfamily.

It localises to the cytoplasm. Its function is as follows. Catalyzes the GTP-dependent ribosomal translocation step during translation elongation. During this step, the ribosome changes from the pre-translocational (PRE) to the post-translocational (POST) state as the newly formed A-site-bound peptidyl-tRNA and P-site-bound deacylated tRNA move to the P and E sites, respectively. Catalyzes the coordinated movement of the two tRNA molecules, the mRNA and conformational changes in the ribosome. The sequence is that of Elongation factor G from Photorhabdus laumondii subsp. laumondii (strain DSM 15139 / CIP 105565 / TT01) (Photorhabdus luminescens subsp. laumondii).